The sequence spans 3841 residues: Transformation/transcription domain-associated protein (3841 aa).

Disordered stretches follow at residues 491–516 (TPTV…PPAT) and 2002–2027 (QQPE…MKRG). The span at 498–515 (ALPPPAPPTPVTPAPPPA) shows a compositional bias: pro residues. A Bipartite nuclear localization signal motif is present at residues 2025–2040 (KRGMSVDSAQDVKRFR). Residues 2671–3239 (VLKYLGKTHN…YFPIRTLYLT (569 aa)) form the FAT domain. Residues 3249–3271 (KSDSGQQQPSSAAAQTHSASDPG) form a disordered region. The segment covering 3251–3268 (DSGQQQPSSAAAQTHSAS) has biased composition (low complexity). One can recognise a PI3K/PI4K catalytic domain in the interval 3482 to 3805 (MPRVEIVQKH…AVTAIMTRLH (324 aa)). The segment at 3488–3494 (VQKHNTA) is G-loop. Residues 3669-3677 (HLNRLNPEM) form a catalytic loop region. The interval 3689–3714 (VSYFRFDINDATGDLDANRPVPFRLT) is activation loop. The 33-residue stretch at 3809–3841 (QFEGGESKVNTLVAAANSLDNLCRMDPAWHPWL) folds into the FATC domain.

The protein belongs to the PI3/PI4-kinase family. TRA1 subfamily.

It localises to the nucleus. Functionally, adapter protein, which is found in various multiprotein chromatin complexes with histone acetyltransferase activity (HAT), which gives a specific tag for epigenetic transcription activation. May be required for the mitotic checkpoint and normal cell cycle progression. May play a role in the formation and maintenance of the auditory system. This Danio rerio (Zebrafish) protein is Transformation/transcription domain-associated protein.